Reading from the N-terminus, the 783-residue chain is MVRVKVNDRIVEVPPGTSVMDAVFHAGYDVPLFCSEKHLSPIGACRMCLVRIGLPKKGPDGKPLLNEKGEPEIQWQPKLAASCVTAVADGMVVDTLSDVVREAQAGMVEFTLLNHPLDCPTCDKGGACELQDRTVEYGLYEKYYQKGPLELPVYTRFEFTRRHVDKHHPLSPFVILDRERCIHCKRCVRYFEEVPGDEVLDFIERGVHTFIGTMDFGLPSGFSGNITDICPVGALLDLTARFRARNWEMEETPTTCALCPVGCGITADTRSGELLRIRAREVPEVNEIWICDAGRFGHEWADQNRLKTPLVRKEGRLVEATWEEAFLALKEGLKEARGEEVGLYLAHDATLEEGLLASELAKALKTPHLDFQGRTAAPASLFPPASLEDLLQADFALVLGDPTEEAPILHLRLSEFVRDLKPPHRYNHGTPFADLQIKERMPRRTDKMALFAPYRAPLMKWAAIHEVHRPGEEREILLALLGDKEGSEMVAKAKEAWEKAKNPVLILGAGVLQDTVAAERARLLAERKGAKVLAMTPAANARGLEAMGVLPGAKGASWDEPGALYAYYGFVPPEEALKGKRFVVMHLSHLHPLAERYAHVVLPAPTFYEKRGHLVNLEGRVLPLSPAPIENGEAEGALQVLALLAEALGVRPPFRLHLEAQKALKARKVPEAMGRLSFRLKELRPKERKGAFYLRPTMWKAHQAVGKAQEAARAELWAHPETARAEALPEGAQVAVETPFGRVEARVVHREDVPKGHLYLSALGPAAGLRVEGRVLVPAGGEA.

The 99-residue stretch at 1–99 (MVRVKVNDRI…GMVVDTLSDV (99 aa)) folds into the 2Fe-2S ferredoxin-type domain. [2Fe-2S] cluster is bound by residues C34, C45, C48, and C83. Residues 99–138 (VVREAQAGMVEFTLLNHPLDCPTCDKGGACELQDRTVEYG) enclose the 4Fe-4S His(Cys)3-ligated-type domain. 12 residues coordinate [4Fe-4S] cluster: H115, C119, C122, C128, C181, C184, C187, C230, C256, C259, C263, and C291. One can recognise a 4Fe-4S Mo/W bis-MGD-type domain in the interval 249–305 (MEETPTTCALCPVGCGITADTRSGELLRIRAREVPEVNEIWICDAGRFGHEWADQNR).

Belongs to the complex I 75 kDa subunit family. As to quaternary structure, NDH-1 is composed of 15 different subunits, Nqo1 to Nqo15. The complex has a L-shaped structure, with the hydrophobic arm (subunits Nqo7, Nqo8 and Nqo10 to Nqo14) embedded in the membrane and the hydrophilic peripheral arm (subunits Nqo1 to Nqo6, Nqo9 and Nqo15) protruding into the bacterial cytoplasm. The hydrophilic domain contains all the redox centers. [2Fe-2S] cluster is required as a cofactor. The cofactor is [4Fe-4S] cluster.

It is found in the cell membrane. The enzyme catalyses a quinone + NADH + 5 H(+)(in) = a quinol + NAD(+) + 4 H(+)(out). In terms of biological role, NDH-1 shuttles electrons from NADH, via FMN and iron-sulfur (Fe-S) centers, to quinones in the respiratory chain. The immediate electron acceptor for the enzyme in this species is menaquinone. Couples the redox reaction to proton translocation (for every two electrons transferred, four hydrogen ions are translocated across the cytoplasmic membrane), and thus conserves the redox energy in a proton gradient required for the synthesis of ATP. This Thermus thermophilus (strain ATCC 27634 / DSM 579 / HB8) protein is NADH-quinone oxidoreductase subunit 3 (nqo3).